An 886-amino-acid chain; its full sequence is Kinesin-like protein KIF18A (886 aa).

Residues 11–355 form the Kinesin motor domain; sequence RMKVVVRVRP…LKYANRAKEI (345 aa). Residue lysine 24 forms a Glycyl lysine isopeptide (Lys-Gly) (interchain with G-Cter in SUMO2) linkage. Position 113-120 (113-120) interacts with ATP; sequence GATGSGKT. A coiled-coil region spans residues 370–404; sequence ISQYVKICNMQKAEILMLKEKLKAYEEQKALSDRN. Residue serine 674 is modified to Phosphoserine. Lysine 683 participates in a covalent cross-link: Glycyl lysine isopeptide (Lys-Gly) (interchain with G-Cter in SUMO2). At serine 695 the chain carries Phosphoserine. Positions 774 to 804 are disordered; that stretch reads EQEPLASSKSSVHRIESSSFSTKDSMPESAG. A Glycyl lysine isopeptide (Lys-Gly) (interchain with G-Cter in SUMO2) cross-link involves residue lysine 782. Serine 826 carries the phosphoserine modification. Lysine 862 is covalently cross-linked (Glycyl lysine isopeptide (Lys-Gly) (interchain with G-Cter in SUMO2)). The segment at 862 to 886 is disordered; sequence KRNTNKTNSNMLRKFRRNTSKENVQ.

It belongs to the TRAFAC class myosin-kinesin ATPase superfamily. Kinesin family. In terms of assembly, interacts with CENPE and ESR1. Post-translationally, glycosylated. Ubiquitinated.

It is found in the cell projection. It localises to the ruffle. The protein localises to the cytoplasm. The protein resides in the nucleus. Its subcellular location is the cytoskeleton. It is found in the microtubule organizing center. It localises to the centrosome. Functionally, microtubule-depolymerizing kinesin which plays a role in chromosome congression by reducing the amplitude of preanaphase oscillations and slowing poleward movement during anaphase, thus suppressing chromosome movements. May stabilize the CENPE-BUB1B complex at the kinetochores during early mitosis and maintains CENPE levels at kinetochores during chromosome congression. This chain is Kinesin-like protein KIF18A (Kif18a), found in Mus musculus (Mouse).